Here is a 244-residue protein sequence, read N- to C-terminus: SPX domain-containing protein 6 (244 aa).

An SPX domain is found at 1-147 (MKFGKLLKRQ…GGALAAPVAE (147 aa)). A disordered region spans residues 212–244 (GSSTHGRHSLPPLTLPDSDWLRSFQPPSPIPIQ).

The chain is SPX domain-containing protein 6 (SPX6) from Oryza sativa subsp. indica (Rice).